The following is a 459-amino-acid chain: DnaJ homolog subfamily A member 1 homolog (459 aa).

In terms of domain architecture, J spans 6 to 73 (EYYERLGVKP…EKRKMYDSYG (68 aa)). The CR-type zinc-finger motif lies at 158–243 (GKLVKISISR…CKGKRVIQGK (86 aa)). Zn(2+) contacts are provided by C171, C174, C188, C191, C215, C218, C231, and C234. CXXCXGXG motif repeat units follow at residues 171–178 (CKTCKGSG), 188–195 (CPTCNGSR), 215–222 (CHTCHGTG), and 231–238 (CKECKGKR). Residues 405-459 (NTNEQSSHGGAGGAYQQHGGAYGHQKQQQQGFNPADFGAQFGGGGPQQAQQCQQQ) are disordered. Positions 418 to 435 (AYQQHGGAYGHQKQQQQG) are enriched in low complexity. C456 bears the Cysteine methyl ester mark. Residue C456 is the site of S-farnesyl cysteine attachment. A propeptide spans 457–459 (QQQ) (removed in mature form).

The protein localises to the membrane. Its subcellular location is the cytoplasm. The protein resides in the microsome. It is found in the mitochondrion. It localises to the nucleus. The protein localises to the perinuclear region. Co-chaperone for Hsp70 family members. Plays a role in protein transport into mitochondria and in the regulation of apoptosis via its role as co-chaperone. The polypeptide is DnaJ homolog subfamily A member 1 homolog (dnaja1) (Dictyostelium discoideum (Social amoeba)).